The sequence spans 89 residues: DNA-directed RNA polymerase subunit omega (89 aa).

Belongs to the RNA polymerase subunit omega family. In terms of assembly, the RNAP catalytic core consists of 2 alpha, 1 beta, 1 beta' and 1 omega subunit. When a sigma factor is associated with the core the holoenzyme is formed, which can initiate transcription.

It carries out the reaction RNA(n) + a ribonucleoside 5'-triphosphate = RNA(n+1) + diphosphate. In terms of biological role, promotes RNA polymerase assembly. Latches the N- and C-terminal regions of the beta' subunit thereby facilitating its interaction with the beta and alpha subunits. The chain is DNA-directed RNA polymerase subunit omega from Idiomarina loihiensis (strain ATCC BAA-735 / DSM 15497 / L2-TR).